Here is a 336-residue protein sequence, read N- to C-terminus: Anthranilate phosphoribosyltransferase (336 aa).

Residues glycine 79, 82–83 (GD), threonine 87, 89–92 (NIST), 107–115 (KHGNRCVSS), and alanine 119 contribute to the 5-phospho-alpha-D-ribose 1-diphosphate site. An anthranilate-binding site is contributed by glycine 79. Mg(2+) is bound at residue serine 91. Position 110 (asparagine 110) interacts with anthranilate. Arginine 165 contributes to the anthranilate binding site. Mg(2+) contacts are provided by aspartate 224 and glutamate 225.

The protein belongs to the anthranilate phosphoribosyltransferase family. Homodimer. Mg(2+) is required as a cofactor.

It catalyses the reaction N-(5-phospho-beta-D-ribosyl)anthranilate + diphosphate = 5-phospho-alpha-D-ribose 1-diphosphate + anthranilate. The protein operates within amino-acid biosynthesis; L-tryptophan biosynthesis; L-tryptophan from chorismate: step 2/5. Catalyzes the transfer of the phosphoribosyl group of 5-phosphorylribose-1-pyrophosphate (PRPP) to anthranilate to yield N-(5'-phosphoribosyl)-anthranilate (PRA). This Lachnoclostridium phytofermentans (strain ATCC 700394 / DSM 18823 / ISDg) (Clostridium phytofermentans) protein is Anthranilate phosphoribosyltransferase.